A 767-amino-acid chain; its full sequence is Photosystem I P700 chlorophyll a apoprotein A1 (767 aa).

8 helical membrane passes run 72–95 (IFSAHFGHLAVIFIWLSGAFFHGA), 158–181 (LMSLAIGALVMAGLMLNAGVFHYH), 197–221 (LNHHLAGLLGLGSLSWTGHLLHVSL), 305–323 (IAHHHLAIAVLFIVAGHMY), 364–387 (WHAQLGVNLAMLGSLSIIVAQHMY), 403–429 (IGLFTHHMWIGGFLIVGAAAHAAIAMI), 451–473 (AIISHLNWVCIWLGAHSFGLYVH), and 548–566 (FMVHHIHAFTIHVTVLILL). Residues C590 and C599 each coordinate [4Fe-4S] cluster. Transmembrane regions (helical) follow at residues 606–627 (HVFLGLFWMYNSLSVVIFHFSW) and 681–703 (TSAYGLMFLGAHFVWAFSLMFLF). H692 serves as a coordination point for chlorophyll a'. 2 residues coordinate chlorophyll a: M700 and Y708. W709 is a phylloquinone binding site. Residues 741 to 761 (AVGVAHYLLGGIATTWAFFHA) traverse the membrane as a helical segment.

The protein belongs to the PsaA/PsaB family. As to quaternary structure, the PsaA/B heterodimer binds the P700 chlorophyll special pair and subsequent electron acceptors. PSI consists of a core antenna complex that captures photons, and an electron transfer chain that converts photonic excitation into a charge separation. The cyanobacterial PSI reaction center is composed of one copy each of PsaA,B,C,D,E,F,I,J,K,L,M and X, and forms trimeric complexes. Requires PSI electron transfer chain: 5 chlorophyll a, 1 chlorophyll a', 2 phylloquinones and 3 4Fe-4S clusters. PSI core antenna: 90 chlorophyll a, 22 carotenoids, 3 phospholipids and 1 galactolipid. P700 is a chlorophyll a/chlorophyll a' dimer, A0 is one or more chlorophyll a, A1 is one or both phylloquinones and FX is a shared 4Fe-4S iron-sulfur center. as cofactor.

The protein localises to the cellular thylakoid membrane. The enzyme catalyses reduced [plastocyanin] + hnu + oxidized [2Fe-2S]-[ferredoxin] = oxidized [plastocyanin] + reduced [2Fe-2S]-[ferredoxin]. Its function is as follows. PsaA and PsaB bind P700, the primary electron donor of photosystem I (PSI), as well as the electron acceptors A0, A1 and FX. PSI is a plastocyanin/cytochrome c6-ferredoxin oxidoreductase, converting photonic excitation into a charge separation, which transfers an electron from the donor P700 chlorophyll pair to the spectroscopically characterized acceptors A0, A1, FX, FA and FB in turn. Oxidized P700 is reduced on the lumenal side of the thylakoid membrane by plastocyanin or cytochrome c6. This chain is Photosystem I P700 chlorophyll a apoprotein A1, found in Synechococcus sp. (strain CC9311).